The following is a 369-amino-acid chain: MAKFELYAEVDVSISGHQYPIIICRNGLIDPELINRFITSKQVLIVTNRTVAPLYLGHLQSGLPSKQCDVVILEDGEEHKNQRSLFTIYDSLIQNKHHRDTSIIALGGGVIGDMAGFAASTYQRGVRFIQLPTTLLAQVDASVGGKTAINHPAGKNMIGSFYQPQAVIIDLNTLKTLPEREFRAGIAEMIKYALLVGGPFFERIQAVLQQGLTVHSPELPLLIAECCQVKAKIVEQDERESGLRALLNLGHTFAHALETYTDYKKWLHGEAVAIGLYCAAVLSEKKGLLDKPIVDQVEKMLIHAGLPHKIPNSIDLIQLRELMSLDKKIKNNCLRFVMIKKPGACYIDDSVTEDCLHNTLINVVEGEQK.

Residues 75 to 80, 109 to 113, 133 to 134, Lys-146, Lys-155, and 173 to 176 contribute to the NAD(+) site; these read DGEEHK, GVIGD, TT, and TLKT. Residues Glu-188, His-251, and His-268 each coordinate Zn(2+).

The protein belongs to the sugar phosphate cyclases superfamily. Dehydroquinate synthase family. The cofactor is Co(2+). Requires Zn(2+) as cofactor. NAD(+) serves as cofactor.

It localises to the cytoplasm. It catalyses the reaction 7-phospho-2-dehydro-3-deoxy-D-arabino-heptonate = 3-dehydroquinate + phosphate. The protein operates within metabolic intermediate biosynthesis; chorismate biosynthesis; chorismate from D-erythrose 4-phosphate and phosphoenolpyruvate: step 2/7. Its function is as follows. Catalyzes the conversion of 3-deoxy-D-arabino-heptulosonate 7-phosphate (DAHP) to dehydroquinate (DHQ). The chain is 3-dehydroquinate synthase from Legionella pneumophila (strain Corby).